A 154-amino-acid chain; its full sequence is Protein X (154 aa).

A mitochondrial targeting sequence region spans residues 68–117 (PCALRFTSARCMETTVNAHQSLPKVLHKRTLGLPAMSTTDLEAYFKDCVF).

Belongs to the orthohepadnavirus protein X family. May form homodimer. May interact with host CEBPA, CFLAR, CREB1, DDB1, E4F1, HBXIP, HSPD1/HSP60, NFKBIA, POLR2E and SMAD4. Interacts with host SMC5-SMC6 complex and induces its degradation. Interacts with host TRPC4AP; leading to prevent ubiquitination of TRPC4AP. Interacts with host PLSCR1; this interaction promotes ubiquitination and degradation of HBx and impairs HBx-mediated cell proliferation. A fraction may be phosphorylated in insect cells and HepG2 cells, a human hepatoblastoma cell line. Phosphorylated in vitro by host protein kinase C or mitogen-activated protein kinase. N-acetylated in insect cells.

The protein localises to the host cytoplasm. It localises to the host nucleus. The protein resides in the host mitochondrion. Its function is as follows. Multifunctional protein that plays a role in silencing host antiviral defenses and promoting viral transcription. Does not seem to be essential for HBV infection. May be directly involved in development of cirrhosis and liver cancer (hepatocellular carcinoma). Most of cytosolic activities involve modulation of cytosolic calcium. The effect on apoptosis is controversial depending on the cell types in which the studies have been conducted. May induce apoptosis by localizing in mitochondria and causing loss of mitochondrial membrane potential. May also modulate apoptosis by binding host CFLAR, a key regulator of the death-inducing signaling complex (DISC). Promotes viral transcription by using the host E3 ubiquitin ligase DDB1 to target the SMC5-SMC6 complex to proteasomal degradation. This host complex would otherwise bind to viral episomal DNA, and prevents its transcription. Moderately stimulates transcription of many different viral and cellular transcription elements. Promoters and enhancers stimulated by HBx contain DNA binding sites for NF-kappa-B, AP-1, AP-2, c-EBP, ATF/CREB, or the calcium-activated factor NF-AT. The polypeptide is Protein X (Homo sapiens (Human)).